A 467-amino-acid polypeptide reads, in one-letter code: Glutamate--tRNA ligase (467 aa).

The 'HIGH' region motif lies at 10 to 20; the sequence is PSPTGYLHVGG. The short motif at 238-242 is the 'KMSKS' region element; that stretch reads RLSKR. K241 lines the ATP pocket.

It belongs to the class-I aminoacyl-tRNA synthetase family. Glutamate--tRNA ligase type 1 subfamily. In terms of assembly, monomer.

The protein localises to the cytoplasm. The enzyme catalyses tRNA(Glu) + L-glutamate + ATP = L-glutamyl-tRNA(Glu) + AMP + diphosphate. Functionally, catalyzes the attachment of glutamate to tRNA(Glu) in a two-step reaction: glutamate is first activated by ATP to form Glu-AMP and then transferred to the acceptor end of tRNA(Glu). In Citrifermentans bemidjiense (strain ATCC BAA-1014 / DSM 16622 / JCM 12645 / Bem) (Geobacter bemidjiensis), this protein is Glutamate--tRNA ligase.